Here is a 116-residue protein sequence, read N- to C-terminus: MELGLSWVFLVAILEGVQCEVQLVESGGGLVQPGGSLRLSCAASGFTFSSYDMHWVRQATGKGLEWVSAIGTAGDPYYPGSVKGRFTISRENAKNSLYLQMNSLRAGDTAVYYCAR.

An N-terminal signal peptide occupies residues 1–19 (MELGLSWVFLVAILEGVQC). The framework-1 stretch occupies residues 20 to 44 (EVQLVESGGGLVQPGGSLRLSCAAS). The Ig-like domain maps to 20-116 (EVQLVESGGG…GDTAVYYCAR (97 aa)). Cysteines 41 and 114 form a disulfide. A complementarity-determining-1 region spans residues 45–52 (GFTFSSYD). A framework-2 region spans residues 53–69 (MHWVRQATGKGLEWVSA). Residues 70–76 (IGTAGDP) are complementarity-determining-2. The tract at residues 77-114 (YYPGSVKGRFTISRENAKNSLYLQMNSLRAGDTAVYYC) is framework-3. Positions 115–116 (AR) are complementarity-determining-3.

In terms of assembly, immunoglobulins are composed of two identical heavy chains and two identical light chains; disulfide-linked.

It localises to the secreted. It is found in the cell membrane. In terms of biological role, v region of the variable domain of immunoglobulin heavy chains that participates in the antigen recognition. Immunoglobulins, also known as antibodies, are membrane-bound or secreted glycoproteins produced by B lymphocytes. In the recognition phase of humoral immunity, the membrane-bound immunoglobulins serve as receptors which, upon binding of a specific antigen, trigger the clonal expansion and differentiation of B lymphocytes into immunoglobulins-secreting plasma cells. Secreted immunoglobulins mediate the effector phase of humoral immunity, which results in the elimination of bound antigens. The antigen binding site is formed by the variable domain of one heavy chain, together with that of its associated light chain. Thus, each immunoglobulin has two antigen binding sites with remarkable affinity for a particular antigen. The variable domains are assembled by a process called V-(D)-J rearrangement and can then be subjected to somatic hypermutations which, after exposure to antigen and selection, allow affinity maturation for a particular antigen. The sequence is that of Immunoglobulin heavy variable 3-13 from Homo sapiens (Human).